We begin with the raw amino-acid sequence, 445 residues long: tRNA-2-methylthio-N(6)-dimethylallyladenosine synthase (445 aa).

Positions 3 to 124 (KNLYIKTYGC…LPELISKIVR (122 aa)) constitute an MTTase N-terminal domain. Positions 12, 48, 87, 162, 166, and 169 each coordinate [4Fe-4S] cluster. Residues 148-380 (YPQGASSFIS…QKELMDQQLA (233 aa)) form the Radical SAM core domain. The 63-residue stretch at 383–445 (ESCVGSTIKV…SLNSLTGEIL (63 aa)) folds into the TRAM domain.

The protein belongs to the methylthiotransferase family. MiaB subfamily. Monomer. It depends on [4Fe-4S] cluster as a cofactor.

It is found in the cytoplasm. The catalysed reaction is N(6)-dimethylallyladenosine(37) in tRNA + (sulfur carrier)-SH + AH2 + 2 S-adenosyl-L-methionine = 2-methylsulfanyl-N(6)-dimethylallyladenosine(37) in tRNA + (sulfur carrier)-H + 5'-deoxyadenosine + L-methionine + A + S-adenosyl-L-homocysteine + 2 H(+). Functionally, catalyzes the methylthiolation of N6-(dimethylallyl)adenosine (i(6)A), leading to the formation of 2-methylthio-N6-(dimethylallyl)adenosine (ms(2)i(6)A) at position 37 in tRNAs that read codons beginning with uridine. In Rickettsia akari (strain Hartford), this protein is tRNA-2-methylthio-N(6)-dimethylallyladenosine synthase.